A 167-amino-acid chain; its full sequence is MAPVCVLVGAPGSGKTTVGRALAELLGVEFRDTDLDIEATVGKPISEIFIDEGEAHFRTLERAAVATALATTAGVLALGGGAVLAEETRSALVGHTVVHLSVELPDAVRRVGLGAGRPLLAVNPRATLKYLLEQRRPHYAAVATATVVTDGRTPEQLAVEVAALLPS.

Gly12–Thr17 is an ATP binding site. Residue Thr16 participates in Mg(2+) binding. Substrate-binding residues include Asp34, Arg58, and Gly80. Residue Arg117 participates in ATP binding. Arg135 serves as a coordination point for substrate. Arg152 contacts ATP.

The protein belongs to the shikimate kinase family. As to quaternary structure, monomer. The cofactor is Mg(2+).

The protein resides in the cytoplasm. It catalyses the reaction shikimate + ATP = 3-phosphoshikimate + ADP + H(+). Its pathway is metabolic intermediate biosynthesis; chorismate biosynthesis; chorismate from D-erythrose 4-phosphate and phosphoenolpyruvate: step 5/7. Its function is as follows. Catalyzes the specific phosphorylation of the 3-hydroxyl group of shikimic acid using ATP as a cosubstrate. This chain is Shikimate kinase, found in Salinispora tropica (strain ATCC BAA-916 / DSM 44818 / JCM 13857 / NBRC 105044 / CNB-440).